Here is a 202-residue protein sequence, read N- to C-terminus: MKFFLDLLPVILFFVAYKFAGAAPDDSHALVAQFLGAGISPSQAPILIATAVAIAATLAQVLIVWLRHGKVDKMLWVSLAIITLFGGATLVFHNPTFIKWKPTVFYWTFAGALAVSALLFRRNLVQKMLEAQIRLPAPVWQRLNLAWIGFFTLMGFLNLYVAYGYSEEAWVNFKLFGAMGLMLAFFLGQGFYLSRHLEEDAK.

6 helical membrane passes run 3-23 (FFLD…AGAA), 46-66 (ILIA…IVWL), 74-94 (MLWV…VFHN), 100-120 (WKPT…ALLF), 145-165 (LAWI…AYGY), and 173-193 (FKLF…GFYL).

It belongs to the YciB family.

Its subcellular location is the cell inner membrane. Plays a role in cell envelope biogenesis, maintenance of cell envelope integrity and membrane homeostasis. This Azoarcus sp. (strain BH72) protein is Inner membrane-spanning protein YciB.